The following is a 140-amino-acid chain: Cysteine proteinase inhibitor 1 (140 aa).

An N-terminal signal peptide occupies residues 1–26; that stretch reads MRKYRVAGLVAALLVLHSLATPSAQA. In terms of domain architecture, Cystatin spans 48–135; that stretch reads GGVEPVGNEN…KELQEFKPVD (88 aa). The short motif at 91-95 is the Secondary area of contact element; sequence QVVAG.

It belongs to the cystatin family. Phytocystatin subfamily.

The protein resides in the secreted. There are two distinct cystatins in rice seeds (Oryzacystatin-1 and -2) with different specificities against cysteine proteinases. May be involved in the control of germination by inhibition of endogenous cysteine proteinases. May play a role in defense by inhibiting exogenous proteases such as those present in digestive tracks of insects and nematodes. The protein is Cysteine proteinase inhibitor 1 of Oryza sativa subsp. japonica (Rice).